We begin with the raw amino-acid sequence, 101 residues long: Large ribosomal subunit protein uL23c (101 aa).

Belongs to the universal ribosomal protein uL23 family. Part of the 50S ribosomal subunit.

The protein localises to the plastid. It is found in the chloroplast. Its function is as follows. Binds to 23S rRNA. The polypeptide is Large ribosomal subunit protein uL23c (rpl23) (Cyanidium caldarium (Red alga)).